The following is a 327-amino-acid chain: Biotin synthase (327 aa).

The region spanning 42-268 (NKVQKASLLS…VMPASTVRLS (227 aa)) is the Radical SAM core domain. The [4Fe-4S] cluster site is built by Cys57, Cys61, and Cys64. 4 residues coordinate [2Fe-2S] cluster: Cys102, Cys134, Cys194, and Arg266.

The protein belongs to the radical SAM superfamily. Biotin synthase family. As to quaternary structure, homodimer. [4Fe-4S] cluster serves as cofactor. The cofactor is [2Fe-2S] cluster.

It carries out the reaction (4R,5S)-dethiobiotin + (sulfur carrier)-SH + 2 reduced [2Fe-2S]-[ferredoxin] + 2 S-adenosyl-L-methionine = (sulfur carrier)-H + biotin + 2 5'-deoxyadenosine + 2 L-methionine + 2 oxidized [2Fe-2S]-[ferredoxin]. The protein operates within cofactor biosynthesis; biotin biosynthesis; biotin from 7,8-diaminononanoate: step 2/2. Functionally, catalyzes the conversion of dethiobiotin (DTB) to biotin by the insertion of a sulfur atom into dethiobiotin via a radical-based mechanism. The sequence is that of Biotin synthase from Rhizobium rhizogenes (strain K84 / ATCC BAA-868) (Agrobacterium radiobacter).